The chain runs to 149 residues: 3-dehydroquinate dehydratase (149 aa).

Catalysis depends on Tyr-26, which acts as the Proton acceptor. Residues Asn-77, His-83, and Asp-90 each coordinate substrate. His-103 serves as the catalytic Proton donor. Residues 104 to 105 (LS) and Arg-114 each bind substrate.

Belongs to the type-II 3-dehydroquinase family. In terms of assembly, homododecamer.

The enzyme catalyses 3-dehydroquinate = 3-dehydroshikimate + H2O. Its pathway is metabolic intermediate biosynthesis; chorismate biosynthesis; chorismate from D-erythrose 4-phosphate and phosphoenolpyruvate: step 3/7. Catalyzes a trans-dehydration via an enolate intermediate. The protein is 3-dehydroquinate dehydratase of Aliivibrio fischeri (strain MJ11) (Vibrio fischeri).